The chain runs to 244 residues: Protein FAM168A (244 aa).

Residue M1 is modified to N-acetylmethionine. Asymmetric dimethylarginine is present on R102. Residues 107–126 form a disordered region; the sequence is TPYKVPPTQSNTAPPPYSPS.

The protein belongs to the FAM168 family. Interacts with POLB. Interacts with AKT1 and MT1X. May interact with FAM168B.

In cancer context, protects cells from induced-DNA damage and apoptosis. Acts, at least in part, through PI3K/AKT/NFKB signaling pathway and by preventing POLB degradation. Decreases POLB ubiquitation and stabilizes its protein levels. The polypeptide is Protein FAM168A (Fam168a) (Mus musculus (Mouse)).